We begin with the raw amino-acid sequence, 321 residues long: GTP 3',8-cyclase (321 aa).

Residues 5–233 (SFNRVIDYIR…QGSSKIYTLE (229 aa)) form the Radical SAM core domain. Arginine 14 provides a ligand contact to GTP. [4Fe-4S] cluster-binding residues include cysteine 21 and cysteine 25. Tyrosine 27 is an S-adenosyl-L-methionine binding site. Position 28 (cysteine 28) interacts with [4Fe-4S] cluster. Arginine 64 provides a ligand contact to GTP. Residue glycine 68 coordinates S-adenosyl-L-methionine. Serine 95 serves as a coordination point for GTP. Serine 119 is a binding site for S-adenosyl-L-methionine. A GTP-binding site is contributed by lysine 155. S-adenosyl-L-methionine is bound at residue methionine 189. [4Fe-4S] cluster is bound by residues cysteine 249 and cysteine 252. 254-256 (RIR) is a binding site for GTP. Cysteine 266 contacts [4Fe-4S] cluster.

Belongs to the radical SAM superfamily. MoaA family. Monomer and homodimer. The cofactor is [4Fe-4S] cluster.

It catalyses the reaction GTP + AH2 + S-adenosyl-L-methionine = (8S)-3',8-cyclo-7,8-dihydroguanosine 5'-triphosphate + 5'-deoxyadenosine + L-methionine + A + H(+). The protein operates within cofactor biosynthesis; molybdopterin biosynthesis. Its function is as follows. Catalyzes the cyclization of GTP to (8S)-3',8-cyclo-7,8-dihydroguanosine 5'-triphosphate. This is GTP 3',8-cyclase from Helicobacter pylori (strain ATCC 700392 / 26695) (Campylobacter pylori).